We begin with the raw amino-acid sequence, 165 residues long: Dihydrofolate reductase type A13 (165 aa).

The DHFR domain occupies R7 to R162.

This sequence belongs to the dihydrofolate reductase family. In terms of assembly, homodimer.

It carries out the reaction (6S)-5,6,7,8-tetrahydrofolate + NADP(+) = 7,8-dihydrofolate + NADPH + H(+). Its pathway is cofactor biosynthesis; tetrahydrofolate biosynthesis; 5,6,7,8-tetrahydrofolate from 7,8-dihydrofolate: step 1/1. Key enzyme in folate metabolism. Catalyzes an essential reaction for de novo glycine and purine synthesis, and for DNA precursor synthesis. This is Dihydrofolate reductase type A13 (dfrA13) from Escherichia coli.